The following is a 505-amino-acid chain: Trans-cinnamate 4-monooxygenase (505 aa).

Residues 3-23 (LLLLEKTLLGLFLAAVVAIVV) traverse the membrane as a helical segment. Residues 213-218 (RSRLAQ) and A306 each bind (E)-cinnamate. C447 lines the heme pocket.

The protein belongs to the cytochrome P450 family. The cofactor is heme.

The protein localises to the membrane. It catalyses the reaction (E)-cinnamate + reduced [NADPH--hemoprotein reductase] + O2 = (E)-4-coumarate + oxidized [NADPH--hemoprotein reductase] + H2O + H(+). The protein operates within phenylpropanoid metabolism; trans-4-coumarate biosynthesis; trans-4-coumarate from trans-cinnamate: step 1/1. Its function is as follows. Catalyzes the first oxidative step of the phenylpropanoid pathway in higher plants by transforming trans-cinnamate into p-coumarate. The compounds formed by this pathway are essential components for lignification, pollination, and defense against ultraviolet light, predators and pathogens. The chain is Trans-cinnamate 4-monooxygenase (CYP73A2) from Vigna radiata var. radiata (Mung bean).